Consider the following 77-residue polypeptide: Acyl carrier protein (77 aa).

A Carrier domain is found at 2-77; it reads SNIEERVKKI…AAIDYVNSAQ (76 aa). Position 37 is an O-(pantetheine 4'-phosphoryl)serine (Ser37).

Belongs to the acyl carrier protein (ACP) family. Post-translationally, 4'-phosphopantetheine is transferred from CoA to a specific serine of apo-ACP by AcpS. This modification is essential for activity because fatty acids are bound in thioester linkage to the sulfhydryl of the prosthetic group.

The protein localises to the cytoplasm. It functions in the pathway lipid metabolism; fatty acid biosynthesis. Functionally, carrier of the growing fatty acid chain in fatty acid biosynthesis. The sequence is that of Acyl carrier protein from Vibrio campbellii (strain ATCC BAA-1116).